A 79-amino-acid polypeptide reads, in one-letter code: Apolipoprotein C-II (79 aa).

The signal sequence occupies residues methionine 1–glycine 21. Positions glycine 45–isoleucine 52 are lipid binding. Residues serine 56–glutamine 79 are lipoprotein lipase cofactor.

The protein belongs to the apolipoprotein C2 family. Post-translationally, proapolipoprotein C-II is synthesized as a sialic acid containing glycoprotein which is subsequently desialylated prior to its proteolytic processing. In terms of processing, proapolipoprotein C-II, the major form found in plasma undergoes proteolytic cleavage of its N-terminal hexapeptide to generate apolipoprotein C-II, which occurs as the minor form in plasma.

It is found in the secreted. Functionally, component of chylomicrons, very low-density lipoproteins (VLDL), low-density lipoproteins (LDL), and high-density lipoproteins (HDL) in plasma. Plays an important role in lipoprotein metabolism as an activator of lipoprotein lipase. Both proapolipoprotein C-II and apolipoprotein C-II can activate lipoprotein lipase. The sequence is that of Apolipoprotein C-II (APOC2) from Alligator mississippiensis (American alligator).